Here is a 271-residue protein sequence, read N- to C-terminus: Formamidopyrimidine-DNA glycosylase (271 aa).

Pro2 functions as the Schiff-base intermediate with DNA in the catalytic mechanism. Glu3 serves as the catalytic Proton donor. Catalysis depends on Lys58, which acts as the Proton donor; for beta-elimination activity. Residues His91, Arg110, and Arg152 each contribute to the DNA site. The FPG-type zinc finger occupies 237-271; sequence WVYGRAGQSCRQCGELVSKTRQGQRSTFFCARCQH. The Proton donor; for delta-elimination activity role is filled by Arg261.

Belongs to the FPG family. As to quaternary structure, monomer. Zn(2+) is required as a cofactor.

The catalysed reaction is Hydrolysis of DNA containing ring-opened 7-methylguanine residues, releasing 2,6-diamino-4-hydroxy-5-(N-methyl)formamidopyrimidine.. The enzyme catalyses 2'-deoxyribonucleotide-(2'-deoxyribose 5'-phosphate)-2'-deoxyribonucleotide-DNA = a 3'-end 2'-deoxyribonucleotide-(2,3-dehydro-2,3-deoxyribose 5'-phosphate)-DNA + a 5'-end 5'-phospho-2'-deoxyribonucleoside-DNA + H(+). Involved in base excision repair of DNA damaged by oxidation or by mutagenic agents. Acts as a DNA glycosylase that recognizes and removes damaged bases. Has a preference for oxidized purines, such as 7,8-dihydro-8-oxoguanine (8-oxoG). Has AP (apurinic/apyrimidinic) lyase activity and introduces nicks in the DNA strand. Cleaves the DNA backbone by beta-delta elimination to generate a single-strand break at the site of the removed base with both 3'- and 5'-phosphates. This Nitrosomonas europaea (strain ATCC 19718 / CIP 103999 / KCTC 2705 / NBRC 14298) protein is Formamidopyrimidine-DNA glycosylase.